The primary structure comprises 188 residues: MIFKDYDFLQNYDLKNFGEKVKIYKELLSKFNRIHNLTHLKNIDENIFDSIKILDFYDFSKAKNIADIGSGAGFPAVFLAFLLQSNFHLFEPNPKKTAFLRTLKIECELSNLHIYKEKVQEYKNTFKADIITSRALMDIKPLLEICTNLKDENTVFILWKGSEIYQELENIKDYEIFENNLRKYCIVK.

S-adenosyl-L-methionine-binding positions include G69, F74, 119–120 (VQ), and R134.

The protein belongs to the methyltransferase superfamily. RNA methyltransferase RsmG family.

It localises to the cytoplasm. It carries out the reaction guanosine(527) in 16S rRNA + S-adenosyl-L-methionine = N(7)-methylguanosine(527) in 16S rRNA + S-adenosyl-L-homocysteine. In terms of biological role, specifically methylates the N7 position of guanine in position 527 of 16S rRNA. The protein is Ribosomal RNA small subunit methyltransferase G of Campylobacter jejuni subsp. doylei (strain ATCC BAA-1458 / RM4099 / 269.97).